A 187-amino-acid chain; its full sequence is ATP synthase subunit b 2 (187 aa).

Residues 1–13 (MAESHATGTTTHT) are compositionally biased toward polar residues. The segment at 1–21 (MAESHATGTTTHTEVPHGKPE) is disordered. Residues 31 to 53 (ASQLVSFAIAFALLYVIVSRFAL) form a helical membrane-spanning segment.

Belongs to the ATPase B chain family. As to quaternary structure, F-type ATPases have 2 components, F(1) - the catalytic core - and F(0) - the membrane proton channel. F(1) has five subunits: alpha(3), beta(3), gamma(1), delta(1), epsilon(1). F(0) has three main subunits: a(1), b(2) and c(10-14). The alpha and beta chains form an alternating ring which encloses part of the gamma chain. F(1) is attached to F(0) by a central stalk formed by the gamma and epsilon chains, while a peripheral stalk is formed by the delta and b chains.

It is found in the cell inner membrane. Its function is as follows. F(1)F(0) ATP synthase produces ATP from ADP in the presence of a proton or sodium gradient. F-type ATPases consist of two structural domains, F(1) containing the extramembraneous catalytic core and F(0) containing the membrane proton channel, linked together by a central stalk and a peripheral stalk. During catalysis, ATP synthesis in the catalytic domain of F(1) is coupled via a rotary mechanism of the central stalk subunits to proton translocation. In terms of biological role, component of the F(0) channel, it forms part of the peripheral stalk, linking F(1) to F(0). The b'-subunit is a diverged and duplicated form of b found in plants and photosynthetic bacteria. In Afipia carboxidovorans (strain ATCC 49405 / DSM 1227 / KCTC 32145 / OM5) (Oligotropha carboxidovorans), this protein is ATP synthase subunit b 2 (atpF2).